A 384-amino-acid polypeptide reads, in one-letter code: Histidinol-phosphate aminotransferase 1 (384 aa).

Lys233 carries the post-translational modification N6-(pyridoxal phosphate)lysine.

The protein belongs to the class-II pyridoxal-phosphate-dependent aminotransferase family. Histidinol-phosphate aminotransferase subfamily. As to quaternary structure, homodimer. It depends on pyridoxal 5'-phosphate as a cofactor.

It catalyses the reaction L-histidinol phosphate + 2-oxoglutarate = 3-(imidazol-4-yl)-2-oxopropyl phosphate + L-glutamate. It participates in amino-acid biosynthesis; L-histidine biosynthesis; L-histidine from 5-phospho-alpha-D-ribose 1-diphosphate: step 7/9. This Thiobacillus denitrificans (strain ATCC 25259 / T1) protein is Histidinol-phosphate aminotransferase 1.